Reading from the N-terminus, the 362-residue chain is Phosphoserine aminotransferase (362 aa).

Position 41 (Arg41) interacts with L-glutamate. Pyridoxal 5'-phosphate-binding positions include 75–76 (GS), Phe101, Thr152, Asp173, and Gln196. Lys197 carries the post-translational modification N6-(pyridoxal phosphate)lysine. 239-240 (NT) is a binding site for pyridoxal 5'-phosphate.

This sequence belongs to the class-V pyridoxal-phosphate-dependent aminotransferase family. SerC subfamily. In terms of assembly, homodimer. Pyridoxal 5'-phosphate is required as a cofactor.

The protein resides in the cytoplasm. The catalysed reaction is O-phospho-L-serine + 2-oxoglutarate = 3-phosphooxypyruvate + L-glutamate. The enzyme catalyses 4-(phosphooxy)-L-threonine + 2-oxoglutarate = (R)-3-hydroxy-2-oxo-4-phosphooxybutanoate + L-glutamate. It participates in amino-acid biosynthesis; L-serine biosynthesis; L-serine from 3-phospho-D-glycerate: step 2/3. Functionally, catalyzes the reversible conversion of 3-phosphohydroxypyruvate to phosphoserine and of 3-hydroxy-2-oxo-4-phosphonooxybutanoate to phosphohydroxythreonine. This Leuconostoc mesenteroides subsp. mesenteroides (strain ATCC 8293 / DSM 20343 / BCRC 11652 / CCM 1803 / JCM 6124 / NCDO 523 / NBRC 100496 / NCIMB 8023 / NCTC 12954 / NRRL B-1118 / 37Y) protein is Phosphoserine aminotransferase.